The chain runs to 153 residues: Large ribosomal subunit protein uL15 (153 aa).

The disordered stretch occupies residues 21-42 (RGIGSGKGKTGGRGIKGQKSRS). Over residues 23–35 (IGSGKGKTGGRGI) the composition is skewed to gly residues.

This sequence belongs to the universal ribosomal protein uL15 family. In terms of assembly, part of the 50S ribosomal subunit.

In terms of biological role, binds to the 23S rRNA. The protein is Large ribosomal subunit protein uL15 of Rickettsia peacockii (strain Rustic).